The following is a 91-amino-acid chain: C-C motif chemokine 5 (91 aa).

The signal sequence occupies residues methionine 1–alanine 23. 2 disulfides stabilise this stretch: cysteine 33–cysteine 57 and cysteine 34–cysteine 73.

Belongs to the intercrine beta (chemokine CC) family.

It is found in the secreted. Chemoattractant for blood monocytes, memory T-helper cells and eosinophils. Causes the release of histamine from basophils and activates eosinophils. May activate several chemokine receptors including CCR1, CCR3, CCR4 and CCR5. May also be an agonist of the G protein-coupled receptor GPR75. Together with GPR75, may play a role in neuron survival through activation of a downstream signaling pathway involving the PI3, Akt and MAP kinases. By activating GPR75 may also play a role in insulin secretion by islet cells. This is C-C motif chemokine 5 (CCL5) from Cavia porcellus (Guinea pig).